The chain runs to 441 residues: Probable D-serine dehydratase (441 aa).

K117 is modified (N6-(pyridoxal phosphate)lysine).

The protein belongs to the serine/threonine dehydratase family. DsdA subfamily. It depends on pyridoxal 5'-phosphate as a cofactor.

It catalyses the reaction D-serine = pyruvate + NH4(+). This chain is Probable D-serine dehydratase, found in Acinetobacter baylyi (strain ATCC 33305 / BD413 / ADP1).